The primary structure comprises 70 residues: DNA-directed RNA polymerase subunit omega (70 aa).

This sequence belongs to the RNA polymerase subunit omega family. As to quaternary structure, the RNAP catalytic core consists of 2 alpha, 1 beta, 1 beta' and 1 omega subunit. When a sigma factor is associated with the core the holoenzyme is formed, which can initiate transcription.

It carries out the reaction RNA(n) + a ribonucleoside 5'-triphosphate = RNA(n+1) + diphosphate. Functionally, promotes RNA polymerase assembly. Latches the N- and C-terminal regions of the beta' subunit thereby facilitating its interaction with the beta and alpha subunits. The polypeptide is DNA-directed RNA polymerase subunit omega (Staphylococcus epidermidis (strain ATCC 12228 / FDA PCI 1200)).